The sequence spans 795 residues: RAS guanyl-releasing protein 1 (795 aa).

The segment covering 1 to 12 has biased composition (basic and acidic residues); the sequence is MGTLGKAREAPR. A disordered region spans residues 1 to 37; that stretch reads MGTLGKAREAPRKPCHGSRAGPKARLEAKSTNSPLPA. The N-terminal Ras-GEF domain occupies 53 to 176; sequence LGHLAKGASL…HLIDTTQINS (124 aa). The tract at residues 57–110 is ras exchanger motif region; required for transforming activity; it reads AKGASLDDLIDSCIQSFDADGNLCRNNQLLQVMLTMHRIIISSAELLQKVMNLY. Residue Thr184 is modified to Phosphothreonine; by PKC. The Ras-GEF domain occupies 205–436; it reads EPEELSEHLT…YELSYAREPR (232 aa). EF-hand domains follow at residues 470–505 and 506–532; these read HVQRMVDSVFKNYDLDQDGYISQEEFEKIAASFPFS and FCVMDKDREGLISRDEITAYFMRASSI. Asp483, Asp485, Asp487, Tyr489, and Glu494 together coordinate Ca(2+). The Phorbol-ester/DAG-type zinc-finger motif lies at 541-591; it reads PHNFQETTYLKPTFCDNCAGFLWGVIKQGYRCKDCGMNCHKQCKDLVVFEC. Ser597 is subject to Phosphoserine. The interval 686 to 694 is suppress the PT region-mediated translocation to plasma membrane; that stretch reads TPGHFVLSS. The interval 717 to 795 is PT region; mediates the BCR-dependent translocation to plasma membrane; sequence LVRKRAFVKW…LAQMDHGDSA (79 aa). Residues 738 to 779 are a coiled coil; sequence ELHLRLRTYQELEQEINTLKADNDALKIQLKYAQKKIESLQL.

It belongs to the RASGRP family. Homodimer. Forms a signaling complex with DGKZ and HRAS. Interacts with F-actin. Interacts with SKAP1. Detected in spleen and thymus. Expressed by mature thymocytes and to a lower extent by bone marrow-derived mast cells (at protein level). Detected in B-cells and keratinocytes (at protein level).

The protein resides in the cytoplasm. It is found in the cytosol. The protein localises to the cell membrane. It localises to the golgi apparatus membrane. Its subcellular location is the endoplasmic reticulum membrane. With respect to regulation, autoinhibited. Activated by diacylglycerol and calcium binding, which induces a conformational change releasing the autoinhibitory state. Regulated by DGKA. Regulated by DGKZ. Regulated by PLC gamma and F-actin polymerization. In terms of biological role, functions as a calcium- and diacylglycerol (DAG)-regulated nucleotide exchange factor specifically activating Ras through the exchange of bound GDP for GTP. Activates the Erk/MAP kinase cascade. Regulates T-cell/B-cell development, homeostasis and differentiation by coupling T-lymphocyte/B-lymphocyte antigen receptors to Ras. Regulates NK cell cytotoxicity and ITAM-dependent cytokine production by activation of Ras-mediated ERK and JNK pathways. Functions in mast cell degranulation and cytokine secretion, regulating FcERI-evoked allergic responses. May also function in differentiation of other cell types. Proto-oncogene, which promotes T-cell lymphomagenesis when its expression is deregulated. The sequence is that of RAS guanyl-releasing protein 1 (Rasgrp1) from Mus musculus (Mouse).